The chain runs to 1577 residues: Dynamin-binding protein (1577 aa).

N-acetylmethionine is present on Met1. SH3 domains follow at residues 2-61, 66-126, 145-204, and 243-302; these read EAGS…IVTI, EGER…ELCL, YSMG…LLGP, and EPGT…LCPD. 2 disordered regions span residues 211–244 and 335–395; these read SVSS…EEEP and EEQR…WEMP. The span at 230 to 244 shows a compositional bias: acidic residues; it reads VGEEEIGPDEDEEEP. Over residues 335 to 344 the composition is skewed to basic and acidic residues; it reads EEQRHETSDH. Phosphoserine is present on Ser496. 2 disordered regions span residues 591-624 and 639-659; these read GSSK…TSPH and VRPS…NAVS. Over residues 639-649 the composition is skewed to pro residues; that stretch reads VRPSRPAPLPP. Ser684 carries the post-translational modification Phosphoserine. A coiled-coil region spans residues 693-757; that stretch reads LVLVRIEEME…ELQQLREMTL (65 aa). The DH domain maps to 784–967; that stretch reads KRAKVIEELL…KEINVNINEY (184 aa). The region spanning 1008-1217 is the BAR domain; that stretch reads LKHLTGFAPQ…LKVAGREGNL (210 aa). Positions 1136–1173 form a coiled coil; that stretch reads ERAEKLKDKKTLEELQSARNNYEALNAQLLDELPKFHQ. Positions 1285–1348 constitute an SH3 5 domain; it reads PPEKLFQAER…YSSFLKPYNP (64 aa). Positions 1348 to 1487 are disordered; that stretch reads PRRSHSDASV…SVPGRNGQSQ (140 aa). The segment covering 1376–1405 has biased composition (polar residues); sequence RQNSGSTLTFNPSSMAVSFTSGSCQKQPQD. Residues 1419-1442 are compositionally biased toward low complexity; sequence SASLNPSNSESSPSRCPSDPDSTS. Residues 1513-1576 form the SH3 6 domain; that stretch reads EGNQVYFAVY…PSNYIRKTEY (64 aa).

Binds DNM1 via its N-terminal SH3 domains. The C-terminal SH3 domain binds a complex containing actin, tubulin, Hsp70 and actin-regulatory proteins, such as ENAH, EVL, WIRE, CR16, WAVE1 and NAP1L1. Interacts with FASLG. Interacts (via SH3 domain 6) with WASL. Interacts (via SH3 domain 6) interacts with ENAH. Interacts (via C-terminal domain) with TJP1; required for the apical cell-cell junction localization of DNMBP. In terms of assembly, (Microbial infection) Interacts (via SH3 domain 6) with L.monocytogenes InlC. As to expression, detected in heart, brain, lung, liver, skeletal muscle, kidney and pancreas.

It is found in the cytoplasm. The protein resides in the golgi apparatus. It localises to the golgi stack. The protein localises to the cytoskeleton. Its subcellular location is the synapse. It is found in the cell junction. Functionally, plays a critical role as a guanine nucleotide exchange factor (GEF) for CDC42 in several intracellular processes associated with the actin and microtubule cytoskeleton. Regulates the structure of apical junctions through F-actin organization in epithelial cells. Participates in the normal lumenogenesis of epithelial cell cysts by regulating spindle orientation. Plays a role in ciliogenesis. May play a role in membrane trafficking between the cell surface and the Golgi. In Homo sapiens (Human), this protein is Dynamin-binding protein.